Reading from the N-terminus, the 329-residue chain is AUGMIN subunit 7 (329 aa).

Residues 169-197 adopt a coiled-coil conformation; that stretch reads DVSELETKLSEQAKILSNLQQKVDDLAAK.

As to quaternary structure, part of the augmin complex composed of 8 subunits. The complex acts on microtubules and interacts with gamma-tubulin in spindles and the phragmoplast.

The protein localises to the cytoplasm. Its subcellular location is the cytoskeleton. It is found in the spindle. The protein resides in the phragmoplast. In terms of biological role, contributes to the assembly of the acentrosomal spindle and phragmoplast microtubule arrays as part of the augmin complex. Regulates the association of gamma-tubulin with the spindle and phragmoplast microtubules. The polypeptide is AUGMIN subunit 7 (Arabidopsis thaliana (Mouse-ear cress)).